The following is a 284-amino-acid chain: Bifunctional protein FolD (284 aa).

Residues 165 to 167 (GRS), Ser190, and Val231 contribute to the NADP(+) site.

This sequence belongs to the tetrahydrofolate dehydrogenase/cyclohydrolase family. Homodimer.

The enzyme catalyses (6R)-5,10-methylene-5,6,7,8-tetrahydrofolate + NADP(+) = (6R)-5,10-methenyltetrahydrofolate + NADPH. The catalysed reaction is (6R)-5,10-methenyltetrahydrofolate + H2O = (6R)-10-formyltetrahydrofolate + H(+). The protein operates within one-carbon metabolism; tetrahydrofolate interconversion. In terms of biological role, catalyzes the oxidation of 5,10-methylenetetrahydrofolate to 5,10-methenyltetrahydrofolate and then the hydrolysis of 5,10-methenyltetrahydrofolate to 10-formyltetrahydrofolate. The protein is Bifunctional protein FolD of Geobacillus kaustophilus (strain HTA426).